Reading from the N-terminus, the 508-residue chain is Hydroxymethylglutaryl-CoA synthase, mitochondrial (508 aa).

Residues 1–37 constitute a mitochondrion transit peptide; it reads MQRLLTPVRQVLQVKRVMQEASLLPARLLPAAHPSFS. The residue at position 52 (lysine 52) is an N6-succinyllysine. (3S)-3-hydroxy-3-methylglutaryl-CoA-binding residues include glutamate 80 and alanine 81. Glutamate 132 serves as the catalytic Proton donor/acceptor. Positions 166, 204, and 208 each coordinate (3S)-3-hydroxy-3-methylglutaryl-CoA. The Acyl-thioester intermediate role is filled by cysteine 166. The residue at position 243 (lysine 243) is an N6-acetyllysine. The residue at position 256 (lysine 256) is an N6-acetyllysine; alternate. Lysine 256 is modified (N6-succinyllysine; alternate). (3S)-3-hydroxy-3-methylglutaryl-CoA contacts are provided by serine 258 and histidine 301. Histidine 301 functions as the Proton donor/acceptor in the catalytic mechanism. Position 306 is an N6-acetyllysine (lysine 306). Lysine 310 serves as a coordination point for (3S)-3-hydroxy-3-methylglutaryl-CoA. At lysine 310 the chain carries N6-acetyllysine; alternate. Lysine 310 bears the N6-succinyllysine; alternate mark. N6-succinyllysine is present on lysine 333. N6-acetyllysine; alternate occurs at positions 342, 350, 354, and 358. An N6-succinyllysine; alternate mark is found at lysine 342, lysine 350, lysine 354, and lysine 358. (3S)-3-hydroxy-3-methylglutaryl-CoA is bound by residues asparagine 380 and serine 414. Serine 433 carries the phosphoserine modification. Lysine 437 is modified (N6-acetyllysine). Position 440 is a phosphoserine (serine 440). Lysine 447 carries the N6-acetyllysine; alternate modification. Residue lysine 447 is modified to N6-succinyllysine; alternate. A Phosphoserine modification is found at serine 456. Lysine 473 bears the N6-acetyllysine; alternate mark. Lysine 473 carries the post-translational modification N6-succinyllysine; alternate. Phosphoserine is present on serine 477.

The protein belongs to the thiolase-like superfamily. HMG-CoA synthase family. In terms of assembly, homodimer. Succinylated. Desuccinylated by SIRT5. Succinylation, at least at Lys-310, inhibits the enzymatic activity.

It localises to the mitochondrion. The catalysed reaction is acetoacetyl-CoA + acetyl-CoA + H2O = (3S)-3-hydroxy-3-methylglutaryl-CoA + CoA + H(+). It participates in metabolic intermediate biosynthesis; (R)-mevalonate biosynthesis; (R)-mevalonate from acetyl-CoA: step 2/3. Its function is as follows. Catalyzes the first irreversible step in ketogenesis, condensing acetyl-CoA to acetoacetyl-CoA to form HMG-CoA, which is converted by HMG-CoA reductase (HMGCR) into mevalonate. The chain is Hydroxymethylglutaryl-CoA synthase, mitochondrial (HMGCS2) from Bos taurus (Bovine).